We begin with the raw amino-acid sequence, 443 residues long: Adenylate cyclase (443 aa).

The next 6 membrane-spanning stretches (helical) occupy residues 47–69 (VLTI…QLAT), 74–93 (WYIA…VPLL), 98–120 (GLVA…GWDV), 124–143 (AGAQ…LVGI), 148–167 (LAVG…EFLV), and 180–202 (SVSF…WFAL). The Cytoplasmic segment spans residues 203–443 (RDTARAEAVM…RGAEPRTAGV (241 aa)). The Guanylate cyclase domain maps to 251–378 (SVLFADIVGF…DAVNVASRME (128 aa)). Positions 256 and 300 each coordinate Mg(2+).

Belongs to the adenylyl cyclase class-4/guanylyl cyclase family. In terms of assembly, homodimer. Can also exist as monomer. It depends on Mg(2+) as a cofactor. Mn(2+) is required as a cofactor.

Its subcellular location is the cell membrane. It carries out the reaction ATP = 3',5'-cyclic AMP + diphosphate. In Mycobacterium bovis (strain ATCC BAA-935 / AF2122/97), this protein is Adenylate cyclase (cya).